A 268-amino-acid polypeptide reads, in one-letter code: UPF0354 protein OB2234 (268 aa).

The protein belongs to the UPF0354 family.

This is UPF0354 protein OB2234 from Oceanobacillus iheyensis (strain DSM 14371 / CIP 107618 / JCM 11309 / KCTC 3954 / HTE831).